The chain runs to 314 residues: MVAPAGEQGRSSTALSDNPFDAKAWRLVDGFDDLTDITYHRHVDDATVRVAFNRPEVRNAFRPHTVDELYRVLDHARMSPDVGVVLLTGNGPSPKDGGWAFCSGGDQRIRGRSGYQYASGDTADTVDVARAGRLHILEVQRLIRFMPKVVICLVNGWAAGGGHSLHVVCDLTLASREYARFKQTDADVGSFDGGYGSAYLARQVGQKFAREIFFLGRTYTAEQMHQMGAVNAVAEHAELETVGLQWAAEINAKSPQAQRMLKFAFNLLDDGLVGQQLFAGEATRLAYMTDEAVEGRDAFLQKRPPDWSPFPRYF.

Residues Arg58, 103 to 107, Tyr115, 157 to 161, Thr184, Ser190, Tyr287, and Lys302 contribute to the substrate site; these read SGGDQ and WAAGG.

The protein belongs to the enoyl-CoA hydratase/isomerase family. MenB subfamily.

It carries out the reaction 2-succinylbenzoyl-CoA + H(+) = 1,4-dihydroxy-2-naphthoyl-CoA + H2O. The protein operates within quinol/quinone metabolism; 1,4-dihydroxy-2-naphthoate biosynthesis; 1,4-dihydroxy-2-naphthoate from chorismate: step 6/7. Its pathway is quinol/quinone metabolism; menaquinone biosynthesis. Its function is as follows. Converts o-succinylbenzoyl-CoA (OSB-CoA) to 1,4-dihydroxy-2-naphthoyl-CoA (DHNA-CoA). This is 1,4-dihydroxy-2-naphthoyl-CoA synthase from Mycobacterium tuberculosis (strain CDC 1551 / Oshkosh).